We begin with the raw amino-acid sequence, 134 residues long: Ribonuclease VapC1 (134 aa).

In terms of domain architecture, PINc spans 3–132; that stretch reads YMLDTNIIIY…RITDLQWQDW (130 aa). Residues Asp-6 and Asp-99 each coordinate Mg(2+).

The protein belongs to the PINc/VapC protein family. Forms a complex with VapB1. Mg(2+) is required as a cofactor.

Its function is as follows. Toxic component of a type II toxin-antitoxin (TA) system. Upon expression in E.coli inhibits growth in liquid culture. Its toxic effect is neutralized by coexpression with antitoxin VapB1. Degrades RNA but not ss- or ds-DNA in vitro, degradation is inhibited by VapB1 antitoxin. This Haemophilus influenzae (strain R2866) protein is Ribonuclease VapC1.